Reading from the N-terminus, the 270-residue chain is 3-phenylpropionate-dihydrodiol/cinnamic acid-dihydrodiol dehydrogenase (270 aa).

F10–A34 is an NAD(+) binding site. S143 provides a ligand contact to substrate. The active-site Proton acceptor is the Y156.

It belongs to the short-chain dehydrogenases/reductases (SDR) family.

The catalysed reaction is 3-(cis-5,6-dihydroxycyclohexa-1,3-dien-1-yl)propanoate + NAD(+) = 3-(2,3-dihydroxyphenyl)propanoate + NADH + H(+). It carries out the reaction (2E)-3-(cis-5,6-dihydroxycyclohexa-1,3-dien-1-yl)prop-2-enoate + NAD(+) = (2E)-3-(2,3-dihydroxyphenyl)prop-2-enoate + NADH + H(+). It participates in aromatic compound metabolism; 3-phenylpropanoate degradation. In terms of biological role, converts 3-phenylpropionate-dihydrodiol (PP-dihydrodiol) and cinnamic acid-dihydrodiol (CI-dihydrodiol) into 3-(2,3-dihydroxylphenyl)propanoic acid (DHPP) and 2,3-dihydroxicinnamic acid (DHCI), respectively. The chain is 3-phenylpropionate-dihydrodiol/cinnamic acid-dihydrodiol dehydrogenase from Escherichia coli O17:K52:H18 (strain UMN026 / ExPEC).